The sequence spans 189 residues: Elongation factor P (189 aa).

The protein belongs to the elongation factor P family.

The protein resides in the cytoplasm. It participates in protein biosynthesis; polypeptide chain elongation. Functionally, involved in peptide bond synthesis. Stimulates efficient translation and peptide-bond synthesis on native or reconstituted 70S ribosomes in vitro. Probably functions indirectly by altering the affinity of the ribosome for aminoacyl-tRNA, thus increasing their reactivity as acceptors for peptidyl transferase. The chain is Elongation factor P from Ehrlichia ruminantium (strain Gardel).